The following is a 695-amino-acid chain: NADPH--cytochrome P450 reductase (695 aa).

Residues 1–8 are Lumenal-facing; it reads MAQLDTLD. The helical transmembrane segment at 9–31 threads the bilayer; the sequence is VVVLAVLLAGSIAYFTKGTFWAV. The Cytoplasmic segment spans residues 32–695; the sequence is AKDPYASSGP…SGSYQEDVWS (664 aa). Residues 66 to 221 enclose the Flavodoxin-like domain; sequence CVIFYGSQTG…DFLAWKEPMW (156 aa). FMN contacts are provided by residues 72–77, 123–126, 169–178, and D204; these read SQTGTA, ATYG, and LGNNTYEHYN. Residues 277-538 form the FAD-binding FR-type domain; the sequence is HNPYIAPIVE…HVRHSNFKLP (262 aa). R296 lines the NADP(+) pocket. Residues 451–454, 469–471, and 486–489 contribute to the FAD site; these read RYYS, TAV, and GVTT. The tract at residues 497-516 is disordered; that stretch reads QKQNGDPSPDPHGQTYAING. Residues T552, 614-615, 620-624, and E656 each bind NADP(+); these read SR and KVYVQ. W694 contacts FAD.

It belongs to the NADPH--cytochrome P450 reductase family. In the N-terminal section; belongs to the flavodoxin family. The protein in the C-terminal section; belongs to the flavoprotein pyridine nucleotide cytochrome reductase family. FAD is required as a cofactor. FMN serves as cofactor.

It localises to the endoplasmic reticulum membrane. It is found in the mitochondrion outer membrane. Its subcellular location is the cell membrane. It catalyses the reaction 2 oxidized [cytochrome P450] + NADPH = 2 reduced [cytochrome P450] + NADP(+) + H(+). In terms of biological role, this enzyme is required for electron transfer from NADP to cytochrome P450 in microsomes. It can also provide electron transfer to heme oxygenase and cytochrome B5. Involved in ergosterol biosynthesis. This Emericella nidulans (strain FGSC A4 / ATCC 38163 / CBS 112.46 / NRRL 194 / M139) (Aspergillus nidulans) protein is NADPH--cytochrome P450 reductase.